The following is a 318-amino-acid chain: Pantothenate kinase (318 aa).

ATP is bound at residue 96-103; that stretch reads GSVAVGKS.

This sequence belongs to the prokaryotic pantothenate kinase family.

The protein resides in the cytoplasm. It carries out the reaction (R)-pantothenate + ATP = (R)-4'-phosphopantothenate + ADP + H(+). It functions in the pathway cofactor biosynthesis; coenzyme A biosynthesis; CoA from (R)-pantothenate: step 1/5. This chain is Pantothenate kinase, found in Coxiella burnetii (strain Dugway 5J108-111).